The primary structure comprises 339 residues: Exopolyphosphatase 1 (339 aa).

The tract at residues 315-339 (QTSVRDTRGQEVDRNAANRSRGDKT) is disordered. Basic and acidic residues predominate over residues 319–339 (RDTRGQEVDRNAANRSRGDKT).

This sequence belongs to the GppA/Ppx family. In terms of assembly, homodimer.

The catalysed reaction is [phosphate](n) + H2O = [phosphate](n-1) + phosphate + H(+). Its function is as follows. Degradation of inorganic polyphosphates (polyP). Releases orthophosphate processively from the ends of the polyP chain. The polypeptide is Exopolyphosphatase 1 (Mycobacterium leprae (strain TN)).